A 505-amino-acid chain; its full sequence is 4-trimethylaminobutyraldehyde dehydrogenase (505 aa).

NAD(+)-binding positions include Lys191 and 243–247 (GSVPT). Glu265 (proton acceptor) is an active-site residue. The Nucleophile role is filled by Cys299. Glu402 contacts NAD(+).

It belongs to the aldehyde dehydrogenase family. Homotetramer. Constitutively expressed in all organs tested: brain, eye, gill, GI, heart, liver, kidney, muscle, skin, testis and ovary.

The protein localises to the cytoplasm. It localises to the cytosol. The enzyme catalyses 4-(trimethylamino)butanal + NAD(+) + H2O = 4-(trimethylamino)butanoate + NADH + 2 H(+). The catalysed reaction is an aldehyde + NAD(+) + H2O = a carboxylate + NADH + 2 H(+). It participates in amine and polyamine biosynthesis; carnitine biosynthesis. In terms of biological role, converts gamma-trimethylaminobutyraldehyde into gamma-butyrobetaine with high efficiency (in vitro). Can catalyze the irreversible oxidation of a broad range of aldehydes to the corresponding acids in an NAD-dependent reaction, but with low efficiency. In Oryzias latipes (Japanese rice fish), this protein is 4-trimethylaminobutyraldehyde dehydrogenase (aldh9A1).